The following is a 104-amino-acid chain: L-rhamnose mutarotase (104 aa).

Y18 lines the substrate pocket. The Proton donor role is filled by H22. Substrate is bound by residues Y41 and 76–77 (WW).

Belongs to the rhamnose mutarotase family. As to quaternary structure, homodimer.

It is found in the cytoplasm. It catalyses the reaction alpha-L-rhamnose = beta-L-rhamnose. It functions in the pathway carbohydrate metabolism; L-rhamnose metabolism. Its function is as follows. Involved in the anomeric conversion of L-rhamnose. In Shigella flexneri serotype 5b (strain 8401), this protein is L-rhamnose mutarotase.